The sequence spans 401 residues: G2/mitotic-specific cyclin-B1 (401 aa).

2 disordered regions span residues 1–30 (MALRVTRNRLASTRAEQGGKTCSVSGPTLK) and 84–103 (KVQVPAQPEPASPTPMETSG). Positions 9 to 26 (RLASTRAEQGGKTCSVSG) are enriched in polar residues.

The protein belongs to the cyclin family. Cyclin AB subfamily. As to quaternary structure, interacts with the CDK1 protein kinase to form a serine/threonine kinase holoenzyme complex also known as maturation promoting factor (MPF). The cyclin subunit imparts substrate specificity to the complex.

Essential for the control of the cell cycle at the G2/M (mitosis) transition. This chain is G2/mitotic-specific cyclin-B1 (ccnb1), found in Oryzias javanicus (Javanese ricefish).